The sequence spans 1911 residues: Protein TIC 214 (1911 aa).

Helical transmembrane passes span 41–61, 81–103, 108–128, 147–167, 195–215, and 238–258; these read IINS…FSIG, ISAT…YAPL, GKPH…FFWN, FNIQ…HFIL, IGWL…LFWI, and IFSI…PLPI. Disordered stretches follow at residues 265-299, 798-817, and 1599-1647; these read ETSE…STEE, DSEE…KEEN, and NQNQ…RKKK. A compositionally biased stretch (acidic residues) spans 268 to 297; sequence ETEESEENEEESDIEITSEPKEQDEEEGST. 2 stretches are compositionally biased toward basic and acidic residues: residues 1603 to 1615 and 1623 to 1635; these read QEKK…RDLG and QKQK…EKNY.

This sequence belongs to the TIC214 family. Part of the Tic complex.

The protein resides in the plastid. Its subcellular location is the chloroplast inner membrane. Functionally, involved in protein precursor import into chloroplasts. May be part of an intermediate translocation complex acting as a protein-conducting channel at the inner envelope. This chain is Protein TIC 214, found in Lemna minor (Common duckweed).